We begin with the raw amino-acid sequence, 333 residues long: Phenylalanine--tRNA ligase alpha subunit (333 aa).

Glu-258 is a Mg(2+) binding site.

Belongs to the class-II aminoacyl-tRNA synthetase family. Phe-tRNA synthetase alpha subunit type 1 subfamily. As to quaternary structure, tetramer of two alpha and two beta subunits. It depends on Mg(2+) as a cofactor.

The protein localises to the cytoplasm. The enzyme catalyses tRNA(Phe) + L-phenylalanine + ATP = L-phenylalanyl-tRNA(Phe) + AMP + diphosphate + H(+). The polypeptide is Phenylalanine--tRNA ligase alpha subunit (Wigglesworthia glossinidia brevipalpis).